The sequence spans 157 residues: Snaclec EMS16 subunit alpha (157 aa).

Positions 1 to 23 (MGRFISVSFGLLVVFLSLSGTGA) are cleaved as a signal peptide. 3 disulfides stabilise this stretch: C27–C38, C55–C152, and C127–C144. The 120-residue stretch at 34–153 (YDQHCYLAIG…CEDLYPFVCK (120 aa)) folds into the C-type lectin domain.

It belongs to the snaclec family. Heterodimer of subunits A and B; disulfide-linked. Expressed by the venom gland.

It localises to the secreted. EMS16 is a potent and selective inhibitor of alpha-2/beta-1 (ITGA2/ITGB1) integrin and acts as a potent antagonist of platelet aggregation and cell migration. Binds specifically to the I domain of the alpha-2 subunit, in a metal ion-independent fashion. This chain is Snaclec EMS16 subunit alpha, found in Echis multisquamatus (Central Asian sand viper).